The primary structure comprises 313 residues: MPIRIPDQLPASDVLRTENIFVMSESRAASQEIRPLRVLILNLMPKKIETETQFLRLLSNSPLQVNVELLRIDNRPSKNTPTEHLDTFYRQFEMVKGKNFDGLIITGAPLGLVQFEDVIYWDHLKTIMEWAKHHVTSTLYVCWAAQAGLKLLYNLPKKTRKEKLSGVYHHKIHHQYHPLLRGFDDTFLAPHSRYADFSPEFLEEHTDLDILATSDVAGTYLATTKDKRNVFVTGHPEYDSHTLHNEYIRDLGEGMEPAIPINYYPNNNPDNPPCASWRSHGHLLFSNWLNYCVYQQTPYDLDHFSEDAFTKDD.

The active-site Acyl-thioester intermediate is C142. K163 and S192 together coordinate substrate. The active-site Proton acceptor is H235. E237 is a catalytic residue. R249 is a substrate binding site.

This sequence belongs to the MetA family.

The protein localises to the cytoplasm. The catalysed reaction is L-homoserine + succinyl-CoA = O-succinyl-L-homoserine + CoA. It participates in amino-acid biosynthesis; L-methionine biosynthesis via de novo pathway; O-succinyl-L-homoserine from L-homoserine: step 1/1. Transfers a succinyl group from succinyl-CoA to L-homoserine, forming succinyl-L-homoserine. This chain is Homoserine O-succinyltransferase, found in Vibrio campbellii (strain ATCC BAA-1116).